The sequence spans 378 residues: MEYKNYTAYQHGSEPAVGVLITNLGTPDAPTKEALRPYLKEFLMDPRVVEPPPARWLWKLILNLIILNTRPAKSAEAYQEVWGKYGDGSPLLDISNRQLMDIEEKVRAHFSGRVEFALGMRYGNPSIASALKSLQDRNVQRLIVVPLYPQYAGATTASTFDAVSAELQQWRWIPELRFVRNYHKHPGYIKALANSIREHQAEHGKPDLLVMSYHGIPQRYFDNGDPYPCECRATSRLVAEELGLNSDEYMVTFQSLFGKEEWVKPYTDATLKSLPDKGVKHLQVICPGFSADCLETIEEIDQENREYFEEAGGEKFSYIPALNDRDDHTTALTQIILQQTRGWPERDGFDAEADKEERALQAKLADQLEKKLSDEFGQ.

His214 and Glu295 together coordinate Fe cation.

This sequence belongs to the ferrochelatase family.

The protein localises to the cytoplasm. The enzyme catalyses heme b + 2 H(+) = protoporphyrin IX + Fe(2+). Its pathway is porphyrin-containing compound metabolism; protoheme biosynthesis; protoheme from protoporphyrin-IX: step 1/1. Functionally, catalyzes the ferrous insertion into protoporphyrin IX. The chain is Ferrochelatase from Hydrogenovibrio crunogenus (strain DSM 25203 / XCL-2) (Thiomicrospira crunogena).